Here is a 95-residue protein sequence, read N- to C-terminus: Small ribosomal subunit protein uS17 (95 aa).

This sequence belongs to the universal ribosomal protein uS17 family. As to quaternary structure, part of the 30S ribosomal subunit.

In terms of biological role, one of the primary rRNA binding proteins, it binds specifically to the 5'-end of 16S ribosomal RNA. The protein is Small ribosomal subunit protein uS17 of Phytoplasma australiense.